Consider the following 63-residue polypeptide: Large ribosomal subunit protein eL24 (63 aa).

Zn(2+) contacts are provided by Cys-7, Cys-10, Cys-33, and Cys-37. Residues 7–37 form a C4-type zinc finger; the sequence is CSFCGGSIEPGTGLMYVLRNGQILWFCSSKC.

The protein belongs to the eukaryotic ribosomal protein eL24 family. As to quaternary structure, part of the 50S ribosomal subunit. Forms a cluster with proteins L3 and L14. Requires Zn(2+) as cofactor.

Its function is as follows. Binds to the 23S rRNA. In Aeropyrum pernix (strain ATCC 700893 / DSM 11879 / JCM 9820 / NBRC 100138 / K1), this protein is Large ribosomal subunit protein eL24.